The sequence spans 580 residues: Type 3 secretion system translocon protein SctE (580 aa).

The next 2 membrane-spanning stretches (helical) occupy residues 313–333 (ILGA…GGAS) and 399–419 (IGSI…VVLV).

Belongs to the SctE/SipB/YopB family. The core secretion machinery of the T3SS is composed of approximately 20 different proteins, including cytoplasmic components, a base, an export apparatus and a needle. This subunit is involved in the formation of a pore, called the translocon, in host membrane.

It is found in the secreted. The protein resides in the host membrane. Functionally, component of the type III secretion system (T3SS), also called injectisome, which is used to inject bacterial effector proteins into eukaryotic host cells. IpaB/SctE and IpaC/SctB are inserted into the host membrane where they form a pore and allow the translocation of effector proteins into the cytosol of target cells. The polypeptide is Type 3 secretion system translocon protein SctE (Shigella dysenteriae).